Consider the following 369-residue polypeptide: Chorismate synthase (369 aa).

Residues Arg-48 and Arg-54 each contribute to the NADP(+) site. Residues 125 to 127, 238 to 239, Gly-278, 293 to 297, and Arg-319 contribute to the FMN site; these read RSS, NA, and KPTSS.

The protein belongs to the chorismate synthase family. In terms of assembly, homotetramer. It depends on FMNH2 as a cofactor.

It catalyses the reaction 5-O-(1-carboxyvinyl)-3-phosphoshikimate = chorismate + phosphate. The protein operates within metabolic intermediate biosynthesis; chorismate biosynthesis; chorismate from D-erythrose 4-phosphate and phosphoenolpyruvate: step 7/7. Its function is as follows. Catalyzes the anti-1,4-elimination of the C-3 phosphate and the C-6 proR hydrogen from 5-enolpyruvylshikimate-3-phosphate (EPSP) to yield chorismate, which is the branch point compound that serves as the starting substrate for the three terminal pathways of aromatic amino acid biosynthesis. This reaction introduces a second double bond into the aromatic ring system. This Burkholderia mallei (strain ATCC 23344) protein is Chorismate synthase.